The sequence spans 929 residues: Urea transporter 2 (929 aa).

The segment covering 1–11 (MSDHPLKEMSD) has biased composition (basic and acidic residues). The tract at residues 1 to 89 (MSDHPLKEMS…KRRESELPRR (89 aa)) is disordered. Over residues 31-42 (SELSSPTWPSSS) the composition is skewed to low complexity. Over residues 55–88 (PEEKDLRSSDEDSHIVKIEKPNERSKRRESELPR) the composition is skewed to basic and acidic residues. Transmembrane regions (helical) follow at residues 133–155 (GAAQ…GLLI), 162–179 (IAGA…LALS), 184–204 (AIAS…VAVF), 212–232 (WWLL…SSAL), 241–261 (LPVF…ATGH), 310–330 (GGVI…HAAI), 349–371 (IYTG…MFYV), 378–399 (LLAL…NMMA), and 400–420 (VVGV…FLLL). A disordered region spans residues 451 to 480 (SDEQKPPNGGGGEQSHGGGQRKAEEGSETV). Gly residues predominate over residues 458-470 (NGGGGEQSHGGGQ). Phosphoserine is present on S486. The next 4 membrane-spanning stretches (helical) occupy residues 609 to 629 (GILI…SGCL), 647 to 667 (AIAA…MAVF), 675 to 695 (WWLL…SSAL), and 704 to 724 (LPVF…ATGH). N742 carries N-linked (GlcNAc...) asparagine glycosylation. Helical transmembrane passes span 773–793 (GGIF…HAAI), 812–832 (IYFG…GGMF), 841–861 (LLAI…ANML), and 863–883 (VFGL…FLLL).

The protein belongs to the urea transporter family. Interacts with SNAPIN which enhances its urea transport activity. In terms of tissue distribution, expressed in the inner medulla of the kidney. Expressed in both the inner and outer renal medulla of the kidney.

The protein localises to the apical cell membrane. It is found in the cell membrane. The catalysed reaction is urea(in) = urea(out). With respect to regulation, inhibited by phloretin. Activated by vasopressin, forskolin, 3-isobutyl-1-methylxanthine (IBMX) and cAMP. Inhibited by phloretin. Its activity is regulated as follows. Inhibited by urea analogs and phloretin and activated by forskolin. With respect to regulation, inhibited by phloretin and activated by forskolin. Its function is as follows. Mediates the transport of urea driven by a concentration gradient across the cell membrane of the kidney inner medullary collecting duct which is critical to the urinary concentrating mechanism. This Rattus norvegicus (Rat) protein is Urea transporter 2 (Slc14a2).